The sequence spans 1369 residues: Rho-associated protein kinase 1 (1369 aa).

Ser2 carries the N-acetylserine modification. A Protein kinase domain is found at 76 to 338 (YEVVKVIGRG…VEEIKRHLFF (263 aa)). Residues 82–90 (IGRGAFGEV) and Lys105 contribute to the ATP site. The active-site Proton acceptor is the Asp198. An AGC-kinase C-terminal domain is found at 341 to 409 (DQWAWETLRD…YSNRRYLPSA (69 aa)). An interaction with FHOD1 region spans residues 368–727 (FDDLEEDKGD…KKLKEEREAR (360 aa)). Residues 422–692 (KNVQESLQKT…RLEQEVNEHK (271 aa)) adopt a coiled-coil conformation. The REM-1 domain occupies 479–556 (SAVSQIEKEK…LEEANDLLRT (78 aa)). Residues 707–946 (EAKSVAMCEM…TVSRLEEANN (240 aa)) form an SHROOM3 binding region. Residues 949-1015 (TKDIELLRKE…LAEIMNRKDF (67 aa)) form the RhoBD domain. The segment at 998 to 1010 (LKTQAVNKLAEIM) is RHOA binding. Positions 1011-1102 (NRKDFKIDRK…KLLDLSDSTS (92 aa)) form a coiled coil. Phosphoserine occurs at positions 1105 and 1108. An auto-inhibitory region spans residues 1115 to 1369 (NLPVGSACIP…VVKNTSGKTS (255 aa)). One can recognise a PH domain in the interval 1133 to 1332 (SSRIEGWLSV…WVTHLVKKIP (200 aa)). The Phorbol-ester/DAG-type zinc finger occupies 1243 to 1298 (GHEFIPTLYHFPANCEACAKPLWHVFKPPPALECRRCHVKSHRDHLDKKEDLIPPC). Ser1343 bears the Phosphoserine mark.

Belongs to the protein kinase superfamily. AGC Ser/Thr protein kinase family. In terms of assembly, homodimer. Interacts with GEM, MYLC2B, RHOE, LIMK1, LIMK2, TSG101, CHORDC1, DAPK3, PFN1, PTEN and JIP3. Interacts with FHOD1 in a Src-dependent manner. Interacts with ITGB1BP1 (via N-terminus and PTB domain). Interacts with RHOA (activated by GTP), RHOB, RHOC and PPP1R12A. Interacts with SHROOM3. It depends on Mg(2+) as a cofactor. Post-translationally, autophosphorylated on serine and threonine residues. In terms of processing, cleaved by caspase-3 during apoptosis. This leads to constitutive activation of the kinase and membrane blebbing. Highly expressed in brain, spleen, lung, liver, skeletal muscle, kidney and testis.

It is found in the cytoplasm. The protein resides in the cytoskeleton. Its subcellular location is the microtubule organizing center. The protein localises to the centrosome. It localises to the centriole. It is found in the golgi apparatus membrane. The protein resides in the cell projection. Its subcellular location is the bleb. The protein localises to the cell membrane. It localises to the lamellipodium. It is found in the ruffle. The enzyme catalyses L-seryl-[protein] + ATP = O-phospho-L-seryl-[protein] + ADP + H(+). It catalyses the reaction L-threonyl-[protein] + ATP = O-phospho-L-threonyl-[protein] + ADP + H(+). With respect to regulation, activated by RHOA binding. Inhibited by Y-27632. Its function is as follows. Protein kinase which is a key regulator of the actin cytoskeleton and cell polarity. Involved in regulation of smooth muscle contraction, actin cytoskeleton organization, stress fiber and focal adhesion formation, neurite retraction, cell adhesion and motility via phosphorylation of DAPK3, GFAP, LIMK1, LIMK2, MYL9/MLC2, TPPP, PFN1 and PPP1R12A. Phosphorylates FHOD1 and acts synergistically with it to promote SRC-dependent non-apoptotic plasma membrane blebbing. Phosphorylates JIP3 and regulates the recruitment of JNK to JIP3 upon UVB-induced stress. Acts as a suppressor of inflammatory cell migration by regulating PTEN phosphorylation and stability. Acts as a negative regulator of VEGF-induced angiogenic endothelial cell activation. Required for centrosome positioning and centrosome-dependent exit from mitosis. Plays a role in terminal erythroid differentiation. Inhibits podocyte motility via regulation of actin cytoskeletal dynamics and phosphorylation of CFL1. Promotes keratinocyte terminal differentiation. Involved in osteoblast compaction through the fibronectin fibrillogenesis cell-mediated matrix assembly process, essential for osteoblast mineralization. May regulate closure of the eyelids and ventral body wall by inducing the assembly of actomyosin bundles. The sequence is that of Rho-associated protein kinase 1 (Rock1) from Rattus norvegicus (Rat).